Reading from the N-terminus, the 351-residue chain is Protein RecA (351 aa).

An ATP-binding site is contributed by 73–80; the sequence is GPESSGKT.

This sequence belongs to the RecA family.

The protein resides in the cytoplasm. In terms of biological role, can catalyze the hydrolysis of ATP in the presence of single-stranded DNA, the ATP-dependent uptake of single-stranded DNA by duplex DNA, and the ATP-dependent hybridization of homologous single-stranded DNAs. It interacts with LexA causing its activation and leading to its autocatalytic cleavage. The chain is Protein RecA from Oleidesulfovibrio alaskensis (strain ATCC BAA-1058 / DSM 17464 / G20) (Desulfovibrio alaskensis).